The sequence spans 256 residues: Probable aquaporin TIP-type alpha (256 aa).

Over 1-24 the chain is Cytoplasmic; that stretch reads MATRRYSFGRTDEATHPDSMRASL. Phosphoserine; by CPK is present on Ser7. Residues 25–44 traverse the membrane as a helical segment; that stretch reads AEFASTFIFVFAGEGSGLAL. At 45-57 the chain is on the vacuolar side; it reads VKIYQDSAFSAGE. The helical transmembrane segment at 58–77 threads the bilayer; the sequence is LLALALAHAFALFAAVSASM. The Cytoplasmic portion of the chain corresponds to 78–102; sequence HVSGGHVNPAVSFGALIGGRISVIR. An NPA 1 motif is present at residues 85 to 87; it reads NPA. Residues 103–121 form a helical membrane-spanning segment; it reads AVYYWIAQLLGSIVAALVL. Topologically, residues 122-143 are vacuolar; the sequence is RLVTNNMRPSGFHVSPGVGVGH. A helical membrane pass occupies residues 144 to 164; the sequence is MFILEVVMTFGLMYTVYGTAI. The Cytoplasmic portion of the chain corresponds to 165 to 169; the sequence is DPKRG. The chain crosses the membrane as a helical span at residues 170–189; the sequence is AVSYIAPLAIGLIVGANILV. At 190–216 the chain is on the vacuolar side; sequence GGPFDGACMNPALAFGPSLVGWQWHQH. The NPA 2 motif lies at 199–201; sequence NPA. Residues 217–239 traverse the membrane as a helical segment; that stretch reads WIFWVGPLLGAALAALVYEYAVI. Residues 240–256 lie on the Cytoplasmic side of the membrane; the sequence is PIEPPPHHHQPLATEDY.

It belongs to the MIP/aquaporin (TC 1.A.8) family. TIP (TC 1.A.8.10) subfamily. In terms of processing, phosphorylated by a tonoplast-bound calcium-dependent protein kinase. In terms of tissue distribution, found in all seed tissues that are alive at seed maturity, but not in tissues that lose viability during seed maturation.

The protein resides in the vacuole membrane. In terms of biological role, channel protein in tonoplast. These proteins may allow the diffusion of amino acids and/or peptides from the vacuolar compartment to the cytoplasm. The sequence is that of Probable aquaporin TIP-type alpha from Phaseolus vulgaris (Kidney bean).